A 57-amino-acid polypeptide reads, in one-letter code: Large ribosomal subunit protein bL32A (57 aa).

The protein belongs to the bacterial ribosomal protein bL32 family.

This is Large ribosomal subunit protein bL32A (rpmF1) from Streptomyces coelicolor (strain ATCC BAA-471 / A3(2) / M145).